The following is a 341-amino-acid chain: Phosphoribosylformylglycinamidine cyclo-ligase (341 aa).

This sequence belongs to the AIR synthase family.

The protein localises to the cytoplasm. The catalysed reaction is 2-formamido-N(1)-(5-O-phospho-beta-D-ribosyl)acetamidine + ATP = 5-amino-1-(5-phospho-beta-D-ribosyl)imidazole + ADP + phosphate + H(+). Its pathway is purine metabolism; IMP biosynthesis via de novo pathway; 5-amino-1-(5-phospho-D-ribosyl)imidazole from N(2)-formyl-N(1)-(5-phospho-D-ribosyl)glycinamide: step 2/2. This Caldicellulosiruptor bescii (strain ATCC BAA-1888 / DSM 6725 / KCTC 15123 / Z-1320) (Anaerocellum thermophilum) protein is Phosphoribosylformylglycinamidine cyclo-ligase.